Reading from the N-terminus, the 280-residue chain is Ribosomal RNA small subunit methyltransferase A (280 aa).

Residues histidine 13, leucine 15, glycine 40, glutamate 61, aspartate 85, and asparagine 106 each coordinate S-adenosyl-L-methionine. Residues 258-280 (RPPADVEDANAPHTEQGKGDNSQ) are disordered.

Belongs to the class I-like SAM-binding methyltransferase superfamily. rRNA adenine N(6)-methyltransferase family. RsmA subfamily.

It is found in the cytoplasm. It catalyses the reaction adenosine(1518)/adenosine(1519) in 16S rRNA + 4 S-adenosyl-L-methionine = N(6)-dimethyladenosine(1518)/N(6)-dimethyladenosine(1519) in 16S rRNA + 4 S-adenosyl-L-homocysteine + 4 H(+). Specifically dimethylates two adjacent adenosines (A1518 and A1519) in the loop of a conserved hairpin near the 3'-end of 16S rRNA in the 30S particle. May play a critical role in biogenesis of 30S subunits. This chain is Ribosomal RNA small subunit methyltransferase A, found in Alcanivorax borkumensis (strain ATCC 700651 / DSM 11573 / NCIMB 13689 / SK2).